The chain runs to 1427 residues: DNA-directed RNA polymerase subunit beta' (1427 aa).

Zn(2+)-binding residues include Cys66, Cys68, Cys81, and Cys84. Residues Asp472, Asp474, and Asp476 each coordinate Mg(2+). Zn(2+)-binding residues include Cys815, Cys889, Cys896, and Cys899.

Belongs to the RNA polymerase beta' chain family. In terms of assembly, the RNAP catalytic core consists of 2 alpha, 1 beta, 1 beta' and 1 omega subunit. When a sigma factor is associated with the core the holoenzyme is formed, which can initiate transcription. The cofactor is Mg(2+). Requires Zn(2+) as cofactor.

It carries out the reaction RNA(n) + a ribonucleoside 5'-triphosphate = RNA(n+1) + diphosphate. In terms of biological role, DNA-dependent RNA polymerase catalyzes the transcription of DNA into RNA using the four ribonucleoside triphosphates as substrates. The chain is DNA-directed RNA polymerase subunit beta' from Bacteroides fragilis (strain YCH46).